The chain runs to 710 residues: Fatty acid oxidation complex subunit alpha (710 aa).

Residues 1–190 (MSMEKTFNLA…KMGLVNDVVP (190 aa)) are enoyl-CoA hydratase. The segment at 310-710 (RKVKKVMVLG…ASDGSQFYKK (401 aa)) is 3-hydroxyacyl-CoA dehydrogenase.

This sequence in the N-terminal section; belongs to the enoyl-CoA hydratase/isomerase family. The protein in the central section; belongs to the 3-hydroxyacyl-CoA dehydrogenase family. Heterotetramer of two alpha chains (FadJ) and two beta chains (FadI).

The protein localises to the cytoplasm. It carries out the reaction a (3S)-3-hydroxyacyl-CoA = a (2E)-enoyl-CoA + H2O. The enzyme catalyses a 4-saturated-(3S)-3-hydroxyacyl-CoA = a (3E)-enoyl-CoA + H2O. It catalyses the reaction a (3S)-3-hydroxyacyl-CoA + NAD(+) = a 3-oxoacyl-CoA + NADH + H(+). The catalysed reaction is (3S)-3-hydroxybutanoyl-CoA = (3R)-3-hydroxybutanoyl-CoA. It participates in lipid metabolism; fatty acid beta-oxidation. In terms of biological role, catalyzes the formation of a hydroxyacyl-CoA by addition of water on enoyl-CoA. Also exhibits 3-hydroxyacyl-CoA epimerase and 3-hydroxyacyl-CoA dehydrogenase activities. This is Fatty acid oxidation complex subunit alpha from Shewanella frigidimarina (strain NCIMB 400).